The primary structure comprises 643 residues: MSDMINITFPDGAVKEFPKGTTTEDIAASISPGLKKKSLAGKLNGQEIDLRTPIQEDGAVEIITEGTEEGLNIMRHSTAHLLAQAIKRIYKDVKFGVGPVIENGFYYDVEMEQALTPDDLPKIEKEMKRIVGENLPIIRKEVSRDEAKAMFAEIGDNLKLELLDAIPEDETVSIYEQGEFFDLCRGVHVPSTGKIKEFKLLSLAGAYWRGDSKNQMLQRIYGTAFFKKDDLKEHLRMLEEAKERDHRKLGKELKLFANSQKVGQGLPLWLPKGATIRRVIERYIVDKELSLGYEHVYTPVLGSKDLYETSGHWDHYQDTMFPPMEMDNETLVLRPMNCPHHMMIYKQDIHSYRELPIRIAELGTMHRYEMSGALSGLQRVRGMTLNDAHIFVRPDQIKEEFIRTVRLIQDVYEDFGLNDYTFRLSYRDPEDTEKYFDDDEMWNKAQSMLKAAMDEMGHDYYEAEGEAAFYGPKLDVQVKTAIGKEETLSTVQLDFLLPERFDLTYVGEDGKQHRPVVIHRGVVSTMERFVAFLIEEHKGALPTWLAPVQFQVIPVSPSVHLDYAKKVQERLQREGLRVELDSRDEKIGYKIREAQMQKIPYMLVVGDQEAENGAVNVRKYGEQKSETVSLDDFVKKAVAEAKK.

In terms of domain architecture, TGS spans 3 to 64; that stretch reads DMINITFPDG…QEDGAVEIIT (62 aa). Residues 245-542 form a catalytic region; it reads DHRKLGKELK…LIEEHKGALP (298 aa). Residues cysteine 338, histidine 389, and histidine 519 each contribute to the Zn(2+) site.

Belongs to the class-II aminoacyl-tRNA synthetase family. Homodimer. Zn(2+) is required as a cofactor.

It localises to the cytoplasm. The enzyme catalyses tRNA(Thr) + L-threonine + ATP = L-threonyl-tRNA(Thr) + AMP + diphosphate + H(+). Catalyzes the attachment of threonine to tRNA(Thr) in a two-step reaction: L-threonine is first activated by ATP to form Thr-AMP and then transferred to the acceptor end of tRNA(Thr). Also edits incorrectly charged L-seryl-tRNA(Thr). This chain is Threonine--tRNA ligase, found in Bacillus velezensis (strain DSM 23117 / BGSC 10A6 / LMG 26770 / FZB42) (Bacillus amyloliquefaciens subsp. plantarum).